Here is a 149-residue protein sequence, read N- to C-terminus: MNLVFNAPSTDKSELEDAGDFTPRFDDRGLITAIVTDAHDGELLMVAHMNAEALALTIKTKTAHYYSRSRGKLWKKGETSGNLQTVTEIRTDCDQDAIWLKVVVAGHDATCHTGRRSCFYRTVELEDGKPVLNVVDDHLHFDPSEIYRK.

Aspartate 92 provides a ligand contact to Mg(2+). Cysteine 93 is a binding site for Zn(2+). The Mg(2+) site is built by aspartate 94 and aspartate 96. Zn(2+) contacts are provided by cysteine 111 and cysteine 118.

Belongs to the PRA-CH family. Homodimer. Mg(2+) serves as cofactor. It depends on Zn(2+) as a cofactor.

Its subcellular location is the cytoplasm. It carries out the reaction 1-(5-phospho-beta-D-ribosyl)-5'-AMP + H2O = 1-(5-phospho-beta-D-ribosyl)-5-[(5-phospho-beta-D-ribosylamino)methylideneamino]imidazole-4-carboxamide. Its pathway is amino-acid biosynthesis; L-histidine biosynthesis; L-histidine from 5-phospho-alpha-D-ribose 1-diphosphate: step 3/9. In terms of biological role, catalyzes the hydrolysis of the adenine ring of phosphoribosyl-AMP. This is Phosphoribosyl-AMP cyclohydrolase from Rhizobium rhizogenes (strain K84 / ATCC BAA-868) (Agrobacterium radiobacter).